Here is a 652-residue protein sequence, read N- to C-terminus: Starch synthase 1, chloroplastic/amyloplastic (652 aa).

Residues 1–49 (MASLQISGSVKFEPFVGFNRIRHFRPIASLGFPRFRRRFSIGRSLLLRR) constitute a chloroplast transit peptide. K156 is an ADP-alpha-D-glucose binding site.

Belongs to the glycosyltransferase 1 family. Bacterial/plant glycogen synthase subfamily. As to expression, expressed in roots, leaves, stems, buds and flowers.

The protein resides in the plastid. It is found in the chloroplast. Its subcellular location is the amyloplast. It carries out the reaction [(1-&gt;4)-alpha-D-glucosyl](n) + ADP-alpha-D-glucose = [(1-&gt;4)-alpha-D-glucosyl](n+1) + ADP + H(+). It functions in the pathway glycan biosynthesis; starch biosynthesis. In terms of biological role, involved in the synthesis of short glycan chains within amylopectin in leaves. Is required to generate chains up to about a degree of polymerization of 10 (DP10). The chain is Starch synthase 1, chloroplastic/amyloplastic (SS1) from Arabidopsis thaliana (Mouse-ear cress).